A 117-amino-acid chain; its full sequence is Gamma-aminobutyric acid receptor-associated protein-like 1 (117 aa).

The Phosphatidylethanolamine amidated glycine; alternate moiety is linked to residue glycine 116. A lipid anchor (Phosphatidylserine amidated glycine; alternate) is attached at glycine 116. Lysine 117 is a propeptide (removed in mature form).

The protein belongs to the ATG8 family. As to quaternary structure, interacts with ATG13, OPRK1, RB1CC1 and ULK1. Interacts with TP53INP1 and TP53INP2. Directly interacts with SQSTM1. Interacts with ATG3, ATG7 and MAP15. Interacts with TECPR2. Interacts with TBC1D5. Interacts with MAPK15. Interacts with TRIM5. Interacts with MEFV and TRIM21. Interacts with WDFY3. Interacts with the reticulophagy receptor TEX264. Interacts with UBA5. Interacts with KBTBD6 and KBTBD7; the interaction is direct. Interacts with reticulophagy regulators RETREG1, RETREG2 and RETREG3. Interacts with IRGM. Interacts with DNM2. Interacts with NCOA4 (via C-terminus). In terms of processing, the precursor molecule is cleaved by ATG4 (ATG4A, ATG4B, ATG4C or ATG4D) to expose the glycine at the C-terminus and form the cytosolic form, GABARAPL1-I. The processed form is then activated by APG7L/ATG7, transferred to ATG3 and conjugated to phosphatidylethanolamine (PE) phospholipid to form the membrane-bound form, GABARAPL1-II. During non-canonical autophagy, the processed form is conjugated to phosphatidylserine (PS) phospholipid. ATG4 proteins also mediate the delipidation of PE-conjugated forms required for GABARAPL1 recycling when autophagosomes fuse with lysosomes. In addition, ATG4B and ATG4D mediate delipidation of ATG8 proteins conjugated to PS during non-canonical autophagy. ATG4B constitutes the major protein for proteolytic activation. ATG4D is the main enzyme for delipidation activity.

It localises to the cytoplasmic vesicle. Its subcellular location is the autophagosome. The protein localises to the cytoplasmic vesicle membrane. It is found in the cytoplasm. The protein resides in the cytoskeleton. It localises to the endoplasmic reticulum. Its subcellular location is the golgi apparatus. Ubiquitin-like modifier that increases cell-surface expression of kappa-type opioid receptor through facilitating anterograde intracellular trafficking of the receptor. Involved in formation of autophagosomal vacuoles. While LC3s are involved in elongation of the phagophore membrane, the GABARAP/GATE-16 subfamily is essential for a later stage in autophagosome maturation. Through its interaction with the reticulophagy receptor TEX264, participates in the remodeling of subdomains of the endoplasmic reticulum into autophagosomes upon nutrient stress, which then fuse with lysosomes for endoplasmic reticulum turnover. In Bos taurus (Bovine), this protein is Gamma-aminobutyric acid receptor-associated protein-like 1.